The following is a 316-amino-acid chain: Pseudouridine-5'-phosphate glycosidase (316 aa).

Glu31 functions as the Proton donor in the catalytic mechanism. 2 residues coordinate substrate: Lys92 and Val112. Asp144 is a Mn(2+) binding site. 146 to 148 is a binding site for substrate; the sequence is SAD. The Nucleophile role is filled by Lys165.

This sequence belongs to the pseudouridine-5'-phosphate glycosidase family. In terms of assembly, homotrimer. Mn(2+) serves as cofactor.

The catalysed reaction is D-ribose 5-phosphate + uracil = psi-UMP + H2O. Functionally, catalyzes the reversible cleavage of pseudouridine 5'-phosphate (PsiMP) to ribose 5-phosphate and uracil. Functions biologically in the cleavage direction, as part of a pseudouridine degradation pathway. Part of an operon that could be involved in the biosynthesis of the blue pigment indigoidine, which is implicated in pathogenicity and protection from oxidative stress. In Dickeya dadantii (strain 3937) (Erwinia chrysanthemi (strain 3937)), this protein is Pseudouridine-5'-phosphate glycosidase.